A 374-amino-acid polypeptide reads, in one-letter code: Flap endonuclease 1 (374 aa).

Residues 1–105 (MGVKGLNKLI…GELEKRLLRR (105 aa)) form an N-domain region. Position 34 (aspartate 34) interacts with Mg(2+). Positions 47 and 71 each coordinate DNA. Positions 87, 159, 161, 180, and 182 each coordinate Mg(2+). Positions 123–254 (DHLKFEKRLV…VTAYKLIKEH (132 aa)) are I-domain. Glutamate 159 is a binding site for DNA. 2 residues coordinate DNA: glycine 232 and aspartate 234. Aspartate 234 lines the Mg(2+) pocket. Residues 339–347 (VQGRLDSFF) form an interaction with PCNA region. Residues 353 to 374 (DDGKDKKRKSTAKDTKSKKQKK) form a disordered region.

The protein belongs to the XPG/RAD2 endonuclease family. FEN1 subfamily. Interacts with PCNA. Three molecules of RAD27 bind to one PCNA trimer with each molecule binding to one PCNA monomer. PCNA stimulates the nuclease activity without altering cleavage specificity. Requires Mg(2+) as cofactor. Post-translationally, phosphorylated. Phosphorylation upon DNA damage induces relocalization to the nuclear plasma.

The protein localises to the nucleus. It is found in the nucleolus. The protein resides in the nucleoplasm. It localises to the mitochondrion. In terms of biological role, structure-specific nuclease with 5'-flap endonuclease and 5'-3' exonuclease activities involved in DNA replication and repair. During DNA replication, cleaves the 5'-overhanging flap structure that is generated by displacement synthesis when DNA polymerase encounters the 5'-end of a downstream Okazaki fragment. It enters the flap from the 5'-end and then tracks to cleave the flap base, leaving a nick for ligation. Also involved in the long patch base excision repair (LP-BER) pathway, by cleaving within the apurinic/apyrimidinic (AP) site-terminated flap. Acts as a genome stabilization factor that prevents flaps from equilibrating into structures that lead to duplications and deletions. Also possesses 5'-3' exonuclease activity on nicked or gapped double-stranded DNA, and exhibits RNase H activity. Also involved in replication and repair of rDNA and in repairing mitochondrial DNA. The chain is Flap endonuclease 1 from Candida tropicalis (strain ATCC MYA-3404 / T1) (Yeast).